The primary structure comprises 190 residues: dCTP deaminase (190 aa).

Lys-113–Arg-118 is a dCTP binding site. Residue Glu-139 is the Proton donor/acceptor of the active site. Residues Gln-158, Tyr-172, Lys-181, and Gln-182 each contribute to the dCTP site.

Belongs to the dCTP deaminase family. In terms of assembly, homotrimer.

It carries out the reaction dCTP + H2O + H(+) = dUTP + NH4(+). Its pathway is pyrimidine metabolism; dUMP biosynthesis; dUMP from dCTP (dUTP route): step 1/2. Its function is as follows. Catalyzes the deamination of dCTP to dUTP. This chain is dCTP deaminase, found in Chlamydia abortus (strain DSM 27085 / S26/3) (Chlamydophila abortus).